A 162-amino-acid polypeptide reads, in one-letter code: Beta-lactoglobulin-1 (162 aa).

Disulfide bonds link Cys-66–Cys-160 and Cys-106–Cys-119.

Belongs to the calycin superfamily. Lipocalin family. As to quaternary structure, monomer. In terms of tissue distribution, synthesized in mammary gland and secreted in milk.

Its subcellular location is the secreted. Its function is as follows. Primary component of whey, it binds retinol and is probably involved in the transport of that molecule. The protein is Beta-lactoglobulin-1 (LGB1) of Equus asinus (Donkey).